Reading from the N-terminus, the 642-residue chain is Sodium-dependent phosphate transport protein 2A (642 aa).

Residues 1 to 106 (MISYGEQLSS…LRRTAMTLLK (106 aa)) are Cytoplasmic-facing. Phosphoserine occurs at positions 14 and 37. A helical transmembrane segment spans residues 107-128 (LPLMVTFLYLFVCSLDVLSSAF). Residues 129-148 (QLAGGKVAGDIFKDNAILAN) lie on the Extracellular side of the membrane. The chain crosses the membrane as a helical span at residues 149–166 (PVAGLVVGILVTVLVQSS). The Cytoplasmic portion of the chain corresponds to 167 to 168 (ST). Residues 169–188 (ATSIIVSMVSSGLLEVSSAI) form a helical membrane-spanning segment. The Extracellular segment spans residues 189–350 (PIIMGSNIGT…HIFVDTQLPD (162 aa)). Disulfide bonds link Cys228–Cys525 and Cys309–Cys339. Residues Asn301, Asn326, and Asn333 are each glycosylated (N-linked (GlcNAc...) asparagine). Residues 351 to 373 (LAVGLILLAGSLVLLCTCLILLV) form a helical membrane-spanning segment. Residues 374-415 (KMLNSLLKGQVAKVIQKVINTDLPAPFTWVTGYFAMVVGAAM) lie on the Cytoplasmic side of the membrane. The chain crosses the membrane as a helical span at residues 416–439 (TFIVQSSSVFTSAITPLVGLGVIS). The Extracellular portion of the chain corresponds to 440-469 (IERAYPLTLGSNIGTTTTAILAALASPREK). A helical membrane pass occupies residues 470-490 (LSSSFQIALCHFFFNISGILL). Residues 491-516 (WYPLPCTRLPIRMAKALGKRTAKYRW) are Cytoplasmic-facing. Thr511 carries the post-translational modification Phosphothreonine; by PKC. A helical membrane pass occupies residues 517–537 (FAVLYLLVCFLLLPSLVFGIS). At 538-542 (MAGWR) the chain is on the extracellular side. Residues 543–564 (AMVGVGAPFGALLAFVVLINVL) form a helical membrane-spanning segment. The Cytoplasmic segment spans residues 565–642 (QSRSPGRLPK…LPAHHNATRL (78 aa)). The residue at position 610 (Ser610) is a Phosphoserine. Phosphothreonine is present on Thr626. Ser628 bears the Phosphoserine mark.

It belongs to the SLC34A transporter family. Interacts via its C-terminal region with NHERF4. Interacts with NHERF1. Interacts with TMEM174; regulates SLC34A1 internalization by PTH and FGF23. As to expression, expressed in the kidney cortex.

Its subcellular location is the apical cell membrane. It localises to the cell membrane. The catalysed reaction is 3 Na(+)(out) + phosphate(out) = 3 Na(+)(in) + phosphate(in). Transport activity is significantly increased in response to dietary phosphate deprivation. Functionally, involved in actively transporting phosphate into cells via Na(+) cotransport in the renal brush border membrane. The cotransport has a Na(+):Pi stoichiometry of 3:1 and is electrogenic. In Oryctolagus cuniculus (Rabbit), this protein is Sodium-dependent phosphate transport protein 2A.